An 835-amino-acid chain; its full sequence is Phenylalanine--tRNA ligase beta subunit (835 aa).

One can recognise a tRNA-binding domain in the interval 44–158; that stretch reads GPVDGPLTVG…LPGADGADVL (115 aa). Positions 414 to 493 constitute a B5 domain; the sequence is WSLPPIRIAV…RLEGLEVIRS (80 aa). Asp-471, Asp-477, Glu-480, and Glu-481 together coordinate Mg(2+). One can recognise an FDX-ACB domain in the interval 741 to 834; that stretch reads SPFPAVLQDV…AAERVGATLR (94 aa).

Belongs to the phenylalanyl-tRNA synthetase beta subunit family. Type 1 subfamily. In terms of assembly, tetramer of two alpha and two beta subunits. It depends on Mg(2+) as a cofactor.

It localises to the cytoplasm. It carries out the reaction tRNA(Phe) + L-phenylalanine + ATP = L-phenylalanyl-tRNA(Phe) + AMP + diphosphate + H(+). The sequence is that of Phenylalanine--tRNA ligase beta subunit from Mycobacterium leprae (strain TN).